The following is a 184-amino-acid chain: NADH-quinone oxidoreductase subunit B (184 aa).

Cys-63, Cys-64, Cys-128, and Cys-158 together coordinate [4Fe-4S] cluster.

It belongs to the complex I 20 kDa subunit family. As to quaternary structure, NDH-1 is composed of 14 different subunits. Subunits NuoB, C, D, E, F, and G constitute the peripheral sector of the complex. The cofactor is [4Fe-4S] cluster.

The protein resides in the cell inner membrane. It carries out the reaction a quinone + NADH + 5 H(+)(in) = a quinol + NAD(+) + 4 H(+)(out). NDH-1 shuttles electrons from NADH, via FMN and iron-sulfur (Fe-S) centers, to quinones in the respiratory chain. Couples the redox reaction to proton translocation (for every two electrons transferred, four hydrogen ions are translocated across the cytoplasmic membrane), and thus conserves the redox energy in a proton gradient. In Stenotrophomonas maltophilia (strain R551-3), this protein is NADH-quinone oxidoreductase subunit B.